Consider the following 328-residue polypeptide: tRNA uridine(34) hydroxylase (328 aa).

The Rhodanese domain occupies 123–217 (SDPETVLIDT…YLEEVPKEKS (95 aa)). The Cysteine persulfide intermediate role is filled by Cys-177. The tract at residues 304-328 (AKKLAQLNKQKKQQAKEAARKKAQQ) is disordered. A compositionally biased stretch (basic and acidic residues) spans 317–328 (QAKEAARKKAQQ).

This sequence belongs to the TrhO family.

It catalyses the reaction uridine(34) in tRNA + AH2 + O2 = 5-hydroxyuridine(34) in tRNA + A + H2O. In terms of biological role, catalyzes oxygen-dependent 5-hydroxyuridine (ho5U) modification at position 34 in tRNAs. This Francisella tularensis subsp. holarctica (strain LVS) protein is tRNA uridine(34) hydroxylase.